Consider the following 67-residue polypeptide: Protein AaeX (67 aa).

Transmembrane regions (helical) follow at residues 8–28 and 47–67; these read VLFGLSFPPAFFALLAALPLF and PALFNCALYGCLFYLVSWLFI.

Belongs to the AaeX family.

It is found in the cell membrane. The protein is Protein AaeX of Edwardsiella piscicida.